The following is a 163-amino-acid chain: Troponin C, skeletal muscle (163 aa).

Ala-2 bears the Blocked amino end (Ala) mark. EF-hand domains are found at residues 18-53 (EMIA…LGQN), 54-89 (PTKE…QMKE), 94-129 (KSEE…TGEH), and 130-163 (VTEE…EGVQ). Residues Asp-31, Asp-33, Asp-37, Glu-42, Asp-67, Asp-69, Ser-71, Thr-73, Glu-78, Asp-107, Asn-109, Asp-111, Glu-118, Asp-143, Asn-145, Asp-147, Arg-149, and Glu-154 each coordinate Ca(2+).

Belongs to the troponin C family.

In terms of biological role, troponin is the central regulatory protein of striated muscle contraction. Tn consists of three components: Tn-I which is the inhibitor of actomyosin ATPase, Tn-T which contains the binding site for tropomyosin and Tn-C. The binding of calcium to Tn-C abolishes the inhibitory action of Tn on actin filaments. The polypeptide is Troponin C, skeletal muscle (TNNC2) (Gallus gallus (Chicken)).